Consider the following 111-residue polypeptide: ATP synthase subunit c (111 aa).

Helical transmembrane passes span 38 to 58 (GLGV…GSGL) and 89 to 109 (AGIA…LIFV).

This sequence belongs to the ATPase C chain family. F-type ATPases have 2 components, F(1) - the catalytic core - and F(0) - the membrane proton channel. F(1) has five subunits: alpha(3), beta(3), gamma(1), delta(1), epsilon(1). F(0) has three main subunits: a(1), b(2) and c(10-14). The alpha and beta chains form an alternating ring which encloses part of the gamma chain. F(1) is attached to F(0) by a central stalk formed by the gamma and epsilon chains, while a peripheral stalk is formed by the delta and b chains.

It localises to the cell membrane. Functionally, f(1)F(0) ATP synthase produces ATP from ADP in the presence of a proton or sodium gradient. F-type ATPases consist of two structural domains, F(1) containing the extramembraneous catalytic core and F(0) containing the membrane proton channel, linked together by a central stalk and a peripheral stalk. During catalysis, ATP synthesis in the catalytic domain of F(1) is coupled via a rotary mechanism of the central stalk subunits to proton translocation. In terms of biological role, key component of the F(0) channel; it plays a direct role in translocation across the membrane. A homomeric c-ring of between 10-14 subunits forms the central stalk rotor element with the F(1) delta and epsilon subunits. In Mycoplasmopsis synoviae (strain 53) (Mycoplasma synoviae), this protein is ATP synthase subunit c.